Reading from the N-terminus, the 882-residue chain is Translation initiation factor IF-2 (882 aa).

The interval isoleucine 38 to asparagine 294 is disordered. 3 stretches are compositionally biased toward basic and acidic residues: residues threonine 66–glycine 76, glycine 109–serine 128, and proline 207–arginine 219. Residues proline 282–lysine 292 show a composition bias toward basic residues. A tr-type G domain is found at alanine 383–aspartate 556. A G1 region spans residues glycine 392–threonine 399. Residue glycine 392–threonine 399 coordinates GTP. The tract at residues glycine 417–histidine 421 is G2. Positions aspartate 438–glycine 441 are G3. GTP contacts are provided by residues aspartate 438–histidine 442 and asparagine 492–aspartate 495. The G4 stretch occupies residues asparagine 492–aspartate 495. Residues serine 528–lysine 530 form a G5 region.

This sequence belongs to the TRAFAC class translation factor GTPase superfamily. Classic translation factor GTPase family. IF-2 subfamily.

The protein resides in the cytoplasm. One of the essential components for the initiation of protein synthesis. Protects formylmethionyl-tRNA from spontaneous hydrolysis and promotes its binding to the 30S ribosomal subunits. Also involved in the hydrolysis of GTP during the formation of the 70S ribosomal complex. This chain is Translation initiation factor IF-2, found in Syntrophomonas wolfei subsp. wolfei (strain DSM 2245B / Goettingen).